A 288-amino-acid chain; its full sequence is Protoheme IX farnesyltransferase 2 (288 aa).

A run of 8 helical transmembrane segments spans residues 16–36, 38–58, 88–108, 111–131, 139–159, 166–186, 227–247, and 266–286; these read IGVFCALAAIAGALATPGAVP, FAPVMAVALAVLLSAAAAGAF, LWPLGLLALTVAAVALAAFAA, WAALHVFLGAFVYGIVYTVWL, IVIGGLSGSFAVLAGAAVAVP, LILALVLFLWTPPHFWSLATA, AFFGAGPLYLGAAILGGGWFL, and FFASLIQLVLLLTAVMVEPLL.

This sequence belongs to the UbiA prenyltransferase family. Protoheme IX farnesyltransferase subfamily.

Its subcellular location is the cell inner membrane. The catalysed reaction is heme b + (2E,6E)-farnesyl diphosphate + H2O = Fe(II)-heme o + diphosphate. It participates in porphyrin-containing compound metabolism; heme O biosynthesis; heme O from protoheme: step 1/1. Functionally, converts heme B (protoheme IX) to heme O by substitution of the vinyl group on carbon 2 of heme B porphyrin ring with a hydroxyethyl farnesyl side group. In Paramagnetospirillum magneticum (strain ATCC 700264 / AMB-1) (Magnetospirillum magneticum), this protein is Protoheme IX farnesyltransferase 2.